A 336-amino-acid chain; its full sequence is Ornithine carbamoyltransferase (336 aa).

Carbamoyl phosphate-binding positions include 56-59 (STRT), glutamine 83, arginine 107, and 134-137 (HPTQ). L-ornithine-binding positions include asparagine 168, aspartate 232, and 236 to 237 (SM). Carbamoyl phosphate contacts are provided by residues 274 to 275 (CL) and arginine 320.

The protein belongs to the aspartate/ornithine carbamoyltransferase superfamily. OTCase family.

The protein localises to the cytoplasm. The catalysed reaction is carbamoyl phosphate + L-ornithine = L-citrulline + phosphate + H(+). Its pathway is amino-acid biosynthesis; L-arginine biosynthesis; L-arginine from L-ornithine and carbamoyl phosphate: step 1/3. Functionally, reversibly catalyzes the transfer of the carbamoyl group from carbamoyl phosphate (CP) to the N(epsilon) atom of ornithine (ORN) to produce L-citrulline. The chain is Ornithine carbamoyltransferase from Erwinia tasmaniensis (strain DSM 17950 / CFBP 7177 / CIP 109463 / NCPPB 4357 / Et1/99).